A 415-amino-acid chain; its full sequence is Serine hydroxymethyltransferase (415 aa).

(6S)-5,6,7,8-tetrahydrofolate is bound by residues Leu-121 and 125–127 (GHL). Lys-230 carries the N6-(pyridoxal phosphate)lysine modification. 355 to 357 (SPF) serves as a coordination point for (6S)-5,6,7,8-tetrahydrofolate.

It belongs to the SHMT family. Homodimer. Requires pyridoxal 5'-phosphate as cofactor.

The protein resides in the cytoplasm. The catalysed reaction is (6R)-5,10-methylene-5,6,7,8-tetrahydrofolate + glycine + H2O = (6S)-5,6,7,8-tetrahydrofolate + L-serine. The protein operates within one-carbon metabolism; tetrahydrofolate interconversion. It participates in amino-acid biosynthesis; glycine biosynthesis; glycine from L-serine: step 1/1. Functionally, catalyzes the reversible interconversion of serine and glycine with tetrahydrofolate (THF) serving as the one-carbon carrier. This reaction serves as the major source of one-carbon groups required for the biosynthesis of purines, thymidylate, methionine, and other important biomolecules. Also exhibits THF-independent aldolase activity toward beta-hydroxyamino acids, producing glycine and aldehydes, via a retro-aldol mechanism. The protein is Serine hydroxymethyltransferase of Lactococcus lactis subsp. cremoris (strain MG1363).